A 272-amino-acid polypeptide reads, in one-letter code: NAD kinase (272 aa).

Aspartate 62 serves as the catalytic Proton acceptor. NAD(+) is bound by residues 62-63 (DG), arginine 67, 129-130 (NE), arginine 140, lysine 157, aspartate 159, 170-175 (SSYSSS), alanine 194, and glutamine 229.

This sequence belongs to the NAD kinase family. The cofactor is a divalent metal cation.

The protein localises to the cytoplasm. It carries out the reaction NAD(+) + ATP = ADP + NADP(+) + H(+). In terms of biological role, involved in the regulation of the intracellular balance of NAD and NADP, and is a key enzyme in the biosynthesis of NADP. Catalyzes specifically the phosphorylation on 2'-hydroxyl of the adenosine moiety of NAD to yield NADP. This is NAD kinase from Thermoplasma volcanium (strain ATCC 51530 / DSM 4299 / JCM 9571 / NBRC 15438 / GSS1).